Reading from the N-terminus, the 426-residue chain is Histidine--tRNA ligase (426 aa).

It belongs to the class-II aminoacyl-tRNA synthetase family.

It localises to the cytoplasm. The catalysed reaction is tRNA(His) + L-histidine + ATP = L-histidyl-tRNA(His) + AMP + diphosphate + H(+). The chain is Histidine--tRNA ligase from Saccharolobus shibatae (strain ATCC 51178 / DSM 5389 / JCM 8931 / NBRC 15437 / B12) (Sulfolobus shibatae).